Reading from the N-terminus, the 423-residue chain is Probable sodium/metabolite cotransporter BASS4, chloroplastic (423 aa).

Residues 1–55 (MVTTHHLCLLRSTVLSVPVRLRAPRAPPHPRLPTASASASSYHGPTHLRRLRPLR) constitute a chloroplast transit peptide. Residues 23–45 (APRAPPHPRLPTASASASSYHGP) are disordered. Helical transmembrane passes span 96 to 116 (FLPL…TLGC), 123 to 140 (LSKY…LTLR), 153 to 173 (AGLF…QFIM), 182 to 202 (FITG…GVTL), 212 to 232 (LALA…PLSL), 244 to 264 (LPTE…IILG), 284 to 301 (GFSV…WIQV), 315 to 335 (AFAV…AFNA), and 389 to 409 (LLVI…SIIV).

This sequence belongs to the bile acid:sodium symporter (BASS) (TC 2.A.28) family.

It localises to the membrane. The protein localises to the plastid. The protein resides in the chloroplast envelope. Functionally, may function as sodium-coupled metabolite transporter across the chloroplast envelope. The chain is Probable sodium/metabolite cotransporter BASS4, chloroplastic (BASS4) from Oryza sativa subsp. indica (Rice).